The primary structure comprises 913 residues: Eukaryotic translation initiation factor 3 subunit C (913 aa).

The disordered stretch occupies residues 1-31 (MSRFFANGSDSESESSEEEVQASNFNKANNF). The segment covering 11 to 20 (SESESSEEEV) has biased composition (acidic residues). Polar residues predominate over residues 21 to 31 (QASNFNKANNF). Phosphoserine is present on residues Ser-34, Ser-165, Ser-177, and Ser-186. 2 disordered regions span residues 157–195 (FREA…AGTG) and 208–285 (PTKV…EDGE). Residues 162–171 (DQESDVDEGE) are compositionally biased toward acidic residues. Basic and acidic residues predominate over residues 172–184 (GEAHDSDAERAGA). The span at 214–239 (DEDDSDDSIDWDSDTESETESSEDEN) shows a compositional bias: acidic residues. The span at 244-263 (MRERFLKRTTEKEDKDDDKR) shows a compositional bias: basic and acidic residues. Over residues 264–276 (KDKRKEQKHKVRK) the composition is skewed to basic residues. Residues 645–821 (FHMHINLELL…ETVVMHRSEP (177 aa)) enclose the PCI domain. Residues 856–913 (RGNMGNRDRGYNRNQNNQGGNWGGQRRDNRNQRNRNQRGHHKQQQQQQQQQVQTIEEE) are disordered. A compositionally biased stretch (basic residues) spans 887–898 (QRNRNQRGHHKQ).

The protein belongs to the eIF-3 subunit C family. As to quaternary structure, component of the eukaryotic translation initiation factor 3 (eIF-3) complex. The eIF-3 complex interacts with pix.

It is found in the cytoplasm. Component of the eukaryotic translation initiation factor 3 (eIF-3) complex, which is involved in protein synthesis of a specialized repertoire of mRNAs and, together with other initiation factors, stimulates binding of mRNA and methionyl-tRNAi to the 40S ribosome. The eIF-3 complex specifically targets and initiates translation of a subset of mRNAs involved in cell proliferation. The protein is Eukaryotic translation initiation factor 3 subunit C of Drosophila virilis (Fruit fly).